Here is a 47-residue protein sequence, read N- to C-terminus: KEGYMGSDGCKMSCVINDQFCDTECQAKLKGSTGYCYFXGLACYXXG.

One can recognise an LCN-type CS-alpha/beta domain in the interval 1–47; the sequence is KEGYMGSDGCKMSCVINDQFCDTECQAKLKGSTGYCYFXGLACYXXG. 2 disulfides stabilise this stretch: Cys14–Cys36 and Cys21–Cys43.

Expressed by the venom gland.

It is found in the secreted. Functionally, causes transient paralysis of the rear legs of and spasms in insects (A.domestica). The chain is Putative beta-neurotoxin from Rhopalurus junceus (Caribbean blue scorpion).